We begin with the raw amino-acid sequence, 380 residues long: Tubulin-like protein CetZ (380 aa).

Residues 10-14, 103-105, Glu136, Asn163, and Asn181 each bind GTP; these read QCGTK and GTG. Positions 359 to 380 are disordered; that stretch reads PSLEATGSDDPEGFAEYREVSR.

This sequence belongs to the CetZ family.

Its subcellular location is the cytoplasm. Functionally, involved in cell shape control. The chain is Tubulin-like protein CetZ from Thermococcus kodakarensis (strain ATCC BAA-918 / JCM 12380 / KOD1) (Pyrococcus kodakaraensis (strain KOD1)).